The following is a 253-amino-acid chain: MSYSVGQVAGFAGVTVRTLHHYDDIGLLVPSERSHAGHRRYSDADLDRLQQILFYRELGFPLDEVAALLDDPAADPRAHLRRQHELLSARIGKLQKMAAAVEQAMEARSMGINLTPEEKFEVFGDFDPDQYEEEVRERWGNTDAYRQSKEKTASYTKEDWQRIQDEADELTRRFVALMDAGEPADSEGAMDAAEDHRQGIARNHYDCGYEMHTCLGEMYVSDERFTRNIDAAKPGLAAYMRDAILANAVRHTP.

The 71-residue stretch at 1–71 (MSYSVGQVAG…LDEVAALLDD (71 aa)) folds into the HTH merR-type domain. The segment at residues 5–24 (VGQVAGFAGVTVRTLHHYDD) is a DNA-binding region (H-T-H motif).

As to quaternary structure, homodimer.

Transcriptional activator. Is activated when bound to the antibiotic thiostrepton. This chain is HTH-type transcriptional activator TipA (tipA), found in Streptomyces coelicolor (strain ATCC BAA-471 / A3(2) / M145).